Consider the following 152-residue polypeptide: Venom protein family 1 protein 2 (152 aa).

The N-terminal stretch at 1–21 is a signal peptide; the sequence is MAKLVFISFLVASFCLIGCFG. Cysteines 70 and 150 form a disulfide.

It belongs to the insect vpf1 family. Expressed by the venom gland (posterior main gland) (at protein level).

The protein resides in the secreted. The polypeptide is Venom protein family 1 protein 2 (Platymeris rhadamanthus (Red spot assassin bug)).